The sequence spans 154 residues: SsrA-binding protein (154 aa).

Residues 132 to 154 (KRESIKKRQDKRDMERALKRGAE) form a disordered region.

This sequence belongs to the SmpB family.

It localises to the cytoplasm. Functionally, required for rescue of stalled ribosomes mediated by trans-translation. Binds to transfer-messenger RNA (tmRNA), required for stable association of tmRNA with ribosomes. tmRNA and SmpB together mimic tRNA shape, replacing the anticodon stem-loop with SmpB. tmRNA is encoded by the ssrA gene; the 2 termini fold to resemble tRNA(Ala) and it encodes a 'tag peptide', a short internal open reading frame. During trans-translation Ala-aminoacylated tmRNA acts like a tRNA, entering the A-site of stalled ribosomes, displacing the stalled mRNA. The ribosome then switches to translate the ORF on the tmRNA; the nascent peptide is terminated with the 'tag peptide' encoded by the tmRNA and targeted for degradation. The ribosome is freed to recommence translation, which seems to be the essential function of trans-translation. This is SsrA-binding protein from Acaryochloris marina (strain MBIC 11017).